Consider the following 118-residue polypeptide: Non-specific lipid-transfer protein A (118 aa).

Positions 1–25 (MAGVMKLACLVLACMIVAGPITANR) are cleaved as a signal peptide. Disulfide bonds link Cys-29-Cys-76, Cys-39-Cys-53, Cys-54-Cys-100, and Cys-74-Cys-114.

The protein belongs to the plant LTP family.

Plant non-specific lipid-transfer proteins transfer phospholipids as well as galactolipids across membranes. May play a role in wax or cutin deposition in the cell walls of expanding epidermal cells and certain secretory tissues. The protein is Non-specific lipid-transfer protein A (WAX9A) of Brassica oleracea var. italica (Broccoli).